Here is a 63-residue protein sequence, read N- to C-terminus: Large ribosomal subunit protein uL30 (63 aa).

This sequence belongs to the universal ribosomal protein uL30 family. In terms of assembly, part of the 50S ribosomal subunit.

This Coxiella burnetii (strain CbuK_Q154) (Coxiella burnetii (strain Q154)) protein is Large ribosomal subunit protein uL30.